We begin with the raw amino-acid sequence, 409 residues long: Pyrophosphate--fructose 6-phosphate 1-phosphotransferase (409 aa).

Gly14 provides a ligand contact to diphosphate. Residue Asp123 participates in Mg(2+) binding. Substrate is bound by residues 151–153 (TID), 196–198 (MGR), Glu268, and 325–328 (YFAR). Asp153 (proton acceptor) is an active-site residue.

Belongs to the phosphofructokinase type A (PFKA) family. PPi-dependent PFK group II subfamily. Clade 'P' sub-subfamily. Homotetramer. Mg(2+) is required as a cofactor.

The protein resides in the cytoplasm. The enzyme catalyses beta-D-fructose 6-phosphate + diphosphate = beta-D-fructose 1,6-bisphosphate + phosphate + H(+). It participates in carbohydrate degradation; glycolysis; D-glyceraldehyde 3-phosphate and glycerone phosphate from D-glucose: step 3/4. Non-allosteric. Its function is as follows. Catalyzes the phosphorylation of D-fructose 6-phosphate, the first committing step of glycolysis. Uses inorganic phosphate (PPi) as phosphoryl donor instead of ATP like common ATP-dependent phosphofructokinases (ATP-PFKs), which renders the reaction reversible, and can thus function both in glycolysis and gluconeogenesis. Consistently, PPi-PFK can replace the enzymes of both the forward (ATP-PFK) and reverse (fructose-bisphosphatase (FBPase)) reactions. The protein is Pyrophosphate--fructose 6-phosphate 1-phosphotransferase of Methylotuvimicrobium alcaliphilum (strain DSM 19304 / NCIMB 14124 / VKM B-2133 / 20Z) (Methylomicrobium alcaliphilum).